The primary structure comprises 127 residues: Large ribosomal subunit protein eL8 (127 aa).

Belongs to the eukaryotic ribosomal protein eL8 family. Part of the 50S ribosomal subunit. Probably part of the RNase P complex.

It localises to the cytoplasm. In terms of biological role, multifunctional RNA-binding protein that recognizes the K-turn motif in ribosomal RNA, the RNA component of RNase P, box H/ACA, box C/D and box C'/D' sRNAs. This is Large ribosomal subunit protein eL8 from Hyperthermus butylicus (strain DSM 5456 / JCM 9403 / PLM1-5).